The primary structure comprises 343 residues: Ribosomal RNA small subunit methyltransferase C (343 aa).

It belongs to the methyltransferase superfamily. RsmC family. In terms of assembly, monomer.

The protein resides in the cytoplasm. It catalyses the reaction guanosine(1207) in 16S rRNA + S-adenosyl-L-methionine = N(2)-methylguanosine(1207) in 16S rRNA + S-adenosyl-L-homocysteine + H(+). Specifically methylates the guanine in position 1207 of 16S rRNA in the 30S particle. The chain is Ribosomal RNA small subunit methyltransferase C from Escherichia coli O81 (strain ED1a).